The primary structure comprises 407 residues: MKILVYGINYSPELTGIGKYTGEMVEWLAAQGHEVRVITAPPYYPQWQVGENYSAWRYKREEGAATVWRCPLYVPKQPSTLKRLLHLGSFAVSSFFPLMAQRRWKPDRIIGVVPTLFCAPGMRLLAKLSGARTVLHIQDYEVDAMLGLGLAGKGKGGKVAQLATAFERSGLHNVDNVSTISRSMMNKAIEKGVAAENVIFFPNWSEIARFQHVADADVDALRNQLDLPDNKKIILYSGNIGEKQGLENVIEAADRLRDEPLIFAIVGQGGGKARLEKMAQQRGLRNMQFFPLQSYDALPALLKMGDCHLVVQKRGAADAVLPSKLTNILAVGGNAVITAEAYTELGQLCETFPGIAVCVEPESVEALVAGIRQALLLPKHNTVAREYAERTLDKENVLRQFINDIRG.

The protein operates within slime biogenesis; slime polysaccharide biosynthesis. In Escherichia coli (strain K12), this protein is Putative colanic acid biosynthesis glycosyl transferase WcaI (wcaI).